The chain runs to 94 residues: MEDDEKGGFRGKDGEGKFGRKNAKYKKKVCKFCADKALLAGLDYKRVDILERFVTNRGKIIPRRITGTCGKHQRALAREIRKSRSIGLLPFKVL.

The protein belongs to the bacterial ribosomal protein bS18 family. As to quaternary structure, part of the 30S ribosomal subunit. Forms a tight heterodimer with protein bS6.

In terms of biological role, binds as a heterodimer with protein bS6 to the central domain of the 16S rRNA, where it helps stabilize the platform of the 30S subunit. This chain is Small ribosomal subunit protein bS18, found in Leptospira biflexa serovar Patoc (strain Patoc 1 / Ames).